The chain runs to 301 residues: Pantothenate synthetase (301 aa).

Residue 30–37 coordinates ATP; it reads MGNLHEGH. His37 (proton donor) is an active-site residue. Gln61 provides a ligand contact to (R)-pantoate. Residue Gln61 coordinates beta-alanine. Residue 149–152 coordinates ATP; the sequence is GEKD. Gln155 lines the (R)-pantoate pocket. ATP is bound by residues Val178 and 186–189; that span reads MSSR.

It belongs to the pantothenate synthetase family. In terms of assembly, homodimer.

The protein resides in the cytoplasm. The catalysed reaction is (R)-pantoate + beta-alanine + ATP = (R)-pantothenate + AMP + diphosphate + H(+). It participates in cofactor biosynthesis; (R)-pantothenate biosynthesis; (R)-pantothenate from (R)-pantoate and beta-alanine: step 1/1. In terms of biological role, catalyzes the condensation of pantoate with beta-alanine in an ATP-dependent reaction via a pantoyl-adenylate intermediate. The chain is Pantothenate synthetase from Vibrio parahaemolyticus serotype O3:K6 (strain RIMD 2210633).